The following is a 494-amino-acid chain: Nuclear distribution protein PAC1 (494 aa).

The 33-residue stretch at Gln-14–Arg-46 folds into the LisH domain. Positions Asn-90–Leu-123 form a coiled coil. WD repeat units lie at residues Asn-153–Ala-192, Ser-196–Gln-244, Gly-251–Thr-292, Pro-295–Thr-334, His-347–His-395, Gly-415–Glu-454, and His-457–Phe-492.

This sequence belongs to the WD repeat LIS1/nudF family. As to quaternary structure, self-associates. Interacts with NDL1 and dynein.

It is found in the cytoplasm. The protein resides in the cytoskeleton. It localises to the spindle pole. Functionally, positively regulates the activity of the minus-end directed microtubule motor protein dynein. Plays a central role in positioning the mitotic spindle at the bud neck during cell division. Targets cytoplasmic dynein to microtubule plus ends, thereby promoting dynein-mediated microtubule sliding along the bud cortex and consequently the movement of the mitotic spindle to the bud neck. The protein is Nuclear distribution protein PAC1 of Saccharomyces cerevisiae (strain YJM789) (Baker's yeast).